The chain runs to 355 residues: UDP-N-acetylglucosamine--N-acetylmuramyl-(pentapeptide) pyrophosphoryl-undecaprenol N-acetylglucosamine transferase (355 aa).

UDP-N-acetyl-alpha-D-glucosamine contacts are provided by residues 13–15, asparagine 125, arginine 162, serine 190, isoleucine 244, and glutamine 289; that span reads TGG.

Belongs to the glycosyltransferase 28 family. MurG subfamily.

It is found in the cell inner membrane. The catalysed reaction is di-trans,octa-cis-undecaprenyl diphospho-N-acetyl-alpha-D-muramoyl-L-alanyl-D-glutamyl-meso-2,6-diaminopimeloyl-D-alanyl-D-alanine + UDP-N-acetyl-alpha-D-glucosamine = di-trans,octa-cis-undecaprenyl diphospho-[N-acetyl-alpha-D-glucosaminyl-(1-&gt;4)]-N-acetyl-alpha-D-muramoyl-L-alanyl-D-glutamyl-meso-2,6-diaminopimeloyl-D-alanyl-D-alanine + UDP + H(+). It participates in cell wall biogenesis; peptidoglycan biosynthesis. In terms of biological role, cell wall formation. Catalyzes the transfer of a GlcNAc subunit on undecaprenyl-pyrophosphoryl-MurNAc-pentapeptide (lipid intermediate I) to form undecaprenyl-pyrophosphoryl-MurNAc-(pentapeptide)GlcNAc (lipid intermediate II). This Neisseria meningitidis serogroup B (strain ATCC BAA-335 / MC58) protein is UDP-N-acetylglucosamine--N-acetylmuramyl-(pentapeptide) pyrophosphoryl-undecaprenol N-acetylglucosamine transferase.